Reading from the N-terminus, the 691-residue chain is Methionine--tRNA ligase (691 aa).

Residues 15–25 (PYTNGPIHIGH) carry the 'HIGH' region motif. Residues Cys147, Cys150, Cys160, and Cys163 each coordinate Zn(2+). Residues 336–340 (KLSTS) carry the 'KMSKS' region motif. Thr339 is a binding site for ATP. A tRNA-binding domain is found at 589-691 (DFTKMDLRVG…DGVKAGTTIN (103 aa)).

The protein belongs to the class-I aminoacyl-tRNA synthetase family. MetG type 1 subfamily. Homodimer. Zn(2+) serves as cofactor.

It is found in the cytoplasm. The catalysed reaction is tRNA(Met) + L-methionine + ATP = L-methionyl-tRNA(Met) + AMP + diphosphate. Is required not only for elongation of protein synthesis but also for the initiation of all mRNA translation through initiator tRNA(fMet) aminoacylation. The sequence is that of Methionine--tRNA ligase from Christiangramia forsetii (strain DSM 17595 / CGMCC 1.15422 / KT0803) (Gramella forsetii).